The primary structure comprises 264 residues: Thymidylate synthase (264 aa).

R21 serves as a coordination point for dUMP. H51 is a binding site for (6R)-5,10-methylene-5,6,7,8-tetrahydrofolate. 126–127 (RR) is a binding site for dUMP. Residue C146 is the Nucleophile of the active site. DUMP-binding positions include 166-169 (RSCD), N177, and 207-209 (HLY). Position 169 (D169) interacts with (6R)-5,10-methylene-5,6,7,8-tetrahydrofolate. A263 lines the (6R)-5,10-methylene-5,6,7,8-tetrahydrofolate pocket.

Belongs to the thymidylate synthase family. Bacterial-type ThyA subfamily. In terms of assembly, homodimer.

It is found in the cytoplasm. It catalyses the reaction dUMP + (6R)-5,10-methylene-5,6,7,8-tetrahydrofolate = 7,8-dihydrofolate + dTMP. It participates in pyrimidine metabolism; dTTP biosynthesis. In terms of biological role, catalyzes the reductive methylation of 2'-deoxyuridine-5'-monophosphate (dUMP) to 2'-deoxythymidine-5'-monophosphate (dTMP) while utilizing 5,10-methylenetetrahydrofolate (mTHF) as the methyl donor and reductant in the reaction, yielding dihydrofolate (DHF) as a by-product. This enzymatic reaction provides an intracellular de novo source of dTMP, an essential precursor for DNA biosynthesis. This chain is Thymidylate synthase, found in Shewanella baltica (strain OS185).